Reading from the N-terminus, the 441-residue chain is Ribosomal protein uS12 methylthiotransferase RimO (441 aa).

The MTTase N-terminal domain maps to 5–116 (PTIAFTHLGC…IVDVMQRVEK (112 aa)). 6 residues coordinate [4Fe-4S] cluster: C14, C50, C79, C154, C158, and C161. The 231-residue stretch at 140-370 (TTSEGVAYVR…EVQQSISWQQ (231 aa)) folds into the Radical SAM core domain. The 67-residue stretch at 372 to 438 (QKLVGQLVDV…IYDLYGCLIS (67 aa)) folds into the TRAM domain.

This sequence belongs to the methylthiotransferase family. RimO subfamily. It depends on [4Fe-4S] cluster as a cofactor.

It is found in the cytoplasm. The enzyme catalyses L-aspartate(89)-[ribosomal protein uS12]-hydrogen + (sulfur carrier)-SH + AH2 + 2 S-adenosyl-L-methionine = 3-methylsulfanyl-L-aspartate(89)-[ribosomal protein uS12]-hydrogen + (sulfur carrier)-H + 5'-deoxyadenosine + L-methionine + A + S-adenosyl-L-homocysteine + 2 H(+). Functionally, catalyzes the methylthiolation of an aspartic acid residue of ribosomal protein uS12. This Trichodesmium erythraeum (strain IMS101) protein is Ribosomal protein uS12 methylthiotransferase RimO.